The following is a 178-amino-acid chain: Cell division protein SepF (178 aa).

The segment covering 19 to 45 (EHYESEHHTPHKDEDDSMEHDREERRA) has biased composition (basic and acidic residues). The interval 19–65 (EHYESEHHTPHKDEDDSMEHDREERRAPAPVREIARETPTPHAAEEE) is disordered.

Belongs to the SepF family. As to quaternary structure, homodimer. Interacts with FtsZ.

Its subcellular location is the cytoplasm. Its function is as follows. Cell division protein that is part of the divisome complex and is recruited early to the Z-ring. Probably stimulates Z-ring formation, perhaps through the cross-linking of FtsZ protofilaments. Its function overlaps with FtsA. The chain is Cell division protein SepF from Arthrobacter sp. (strain FB24).